The primary structure comprises 203 residues: ATP-dependent Clp protease proteolytic subunit 2 (203 aa).

Serine 97 (nucleophile) is an active-site residue. Histidine 122 is an active-site residue.

This sequence belongs to the peptidase S14 family. Fourteen ClpP subunits assemble into 2 heptameric rings which stack back to back to give a disk-like structure with a central cavity, resembling the structure of eukaryotic proteasomes.

The protein resides in the cytoplasm. The catalysed reaction is Hydrolysis of proteins to small peptides in the presence of ATP and magnesium. alpha-casein is the usual test substrate. In the absence of ATP, only oligopeptides shorter than five residues are hydrolyzed (such as succinyl-Leu-Tyr-|-NHMec, and Leu-Tyr-Leu-|-Tyr-Trp, in which cleavage of the -Tyr-|-Leu- and -Tyr-|-Trp bonds also occurs).. Its function is as follows. Cleaves peptides in various proteins in a process that requires ATP hydrolysis. Has a chymotrypsin-like activity. Plays a major role in the degradation of misfolded proteins. The protein is ATP-dependent Clp protease proteolytic subunit 2 of Myxococcus xanthus (strain DK1622).